The chain runs to 954 residues: Centrosomal protein of 112 kDa (954 aa).

A coiled-coil region spans residues 276–954 (QKHDAEVQKI…EELTTYQSRR (679 aa)).

The protein resides in the cytoplasm. It is found in the cytoskeleton. It localises to the microtubule organizing center. Its subcellular location is the centrosome. This chain is Centrosomal protein of 112 kDa (Cep112), found in Mus musculus (Mouse).